We begin with the raw amino-acid sequence, 444 residues long: Acyl-CoA 6-desaturase (444 aa).

Topologically, residues M1–V131 are cytoplasmic. Positions V18–A95 constitute a Cytochrome b5 heme-binding domain. The helical transmembrane segment at F132–F152 threads the bilayer. At Y153–G157 the chain is on the lumenal side. The chain crosses the membrane as a helical span at residues W158–L178. Residues Q179–E264 are Cytoplasmic-facing. Residues H180–H184 carry the Histidine box-1 motif. Positions H217 to H221 match the Histidine box-2 motif. The chain crosses the membrane as a helical span at residues Y265–M285. The Lumenal portion of the chain corresponds to T286 to R305. The chain crosses the membrane as a helical span at residues F306–I326. Residues R327–K444 are Cytoplasmic-facing. A Histidine box-3 motif is present at residues Q382–H386.

Belongs to the fatty acid desaturase type 1 family.

The protein resides in the endoplasmic reticulum membrane. The enzyme catalyses (9Z,12Z)-octadecadienoyl-CoA + 2 Fe(II)-[cytochrome b5] + O2 + 2 H(+) = (6Z,9Z,12Z)-octadecatrienoyl-CoA + 2 Fe(III)-[cytochrome b5] + 2 H2O. The catalysed reaction is (9Z,12Z,15Z)-octadecatrienoyl-CoA + 2 Fe(II)-[cytochrome b5] + O2 + 2 H(+) = (6Z,9Z,12Z,15Z)-octadecatetraenoyl-CoA + 2 Fe(III)-[cytochrome b5] + 2 H2O. It catalyses the reaction (9Z,12Z,15Z,18Z,21Z)-tetracosapentaenoyl-CoA + 2 Fe(II)-[cytochrome b5] + O2 + 2 H(+) = (6Z,9Z,12Z,15Z,18Z,21Z)-tetracosahexaenoyl-CoA + 2 Fe(III)-[cytochrome b5] + 2 H2O. It carries out the reaction (11E)-octadecenoyl-CoA + 2 Fe(II)-[cytochrome b5] + O2 + 2 H(+) = (6Z,11E)-octadecadienoyl-CoA + 2 Fe(III)-[cytochrome b5] + 2 H2O. The enzyme catalyses (11Z,14Z)-eicosadienoyl-CoA + 2 Fe(II)-[cytochrome b5] + O2 + 2 H(+) = (8Z,11Z,14Z)-eicosatrienoyl-CoA + 2 Fe(III)-[cytochrome b5] + 2 H2O. The catalysed reaction is (11Z,14Z,17Z)-eicosatrienoyl-CoA + 2 Fe(II)-[cytochrome b5] + O2 + 2 H(+) = (8Z,11Z,14Z,17Z)-eicosatetraenoyl-CoA + 2 Fe(III)-[cytochrome b5] + 2 H2O. Its pathway is lipid metabolism; polyunsaturated fatty acid biosynthesis. Its function is as follows. Involved in the biosynthesis of highly unsaturated fatty acids (HUFA) from the essential polyunsaturated fatty acids (PUFA) linoleic acid (LA) (18:2n-6) and alpha-linolenic acid (ALA) (18:3n-3) precursors, acting as a fatty acyl-coenzyme A (CoA) desaturase that introduces a cis double bond at carbon 6 of the fatty acyl chain. Catalyzes the first and rate limiting step in this pathway which is the desaturation of LA (18:2n-6) and ALA (18:3n-3) into gamma-linoleate (GLA) (18:3n-6) and stearidonate (18:4n-3), respectively. Subsequently, in the biosynthetic pathway of HUFA n-3 series, it desaturates tetracosapentaenoate (24:5n-3) to tetracosahexaenoate (24:6n-3), which is then converted to docosahexaenoate (DHA)(22:6n-3), an important lipid for nervous system function. It can also desaturate (11E)-octadecenoate (trans-vaccenoate) at carbon 6 generating (6Z,11E)-octadecadienoate. In addition to Delta-6 activity, this enzyme exhibits Delta-8 activity with slight biases toward n-3 fatty acyl-CoA substrates. This is Acyl-CoA 6-desaturase (FADS2) from Pongo abelii (Sumatran orangutan).